The following is a 387-amino-acid chain: Flap endonuclease 1 (387 aa).

The segment at 1-104 (MGILGLSKLI…GELAKRAERR (104 aa)) is N-domain. Residue D34 participates in Mg(2+) binding. DNA contacts are provided by R47 and R70. Mg(2+) is bound by residues D86, E158, E160, D179, and D181. Positions 122 to 253 (GIEKFNRRLV…KRAIELINNY (132 aa)) are I-domain. E158 contributes to the DNA binding site. The DNA site is built by G231 and D233. Residue D233 participates in Mg(2+) binding. The interaction with PCNA stretch occupies residues 336 to 344 (TQVRLDSFF). The tract at residues 345-387 (KTLPSTPNATNAAKRKAEEAKKSANNKKAKTSGGGGGRGRRPK) is disordered.

The protein belongs to the XPG/RAD2 endonuclease family. FEN1 subfamily. Interacts with PCNA. Three molecules of FEN1 bind to one PCNA trimer with each molecule binding to one PCNA monomer. PCNA stimulates the nuclease activity without altering cleavage specificity. Mg(2+) is required as a cofactor. In terms of processing, phosphorylated. Phosphorylation upon DNA damage induces relocalization to the nuclear plasma.

The protein resides in the nucleus. The protein localises to the nucleolus. It localises to the nucleoplasm. Its subcellular location is the mitochondrion. Its function is as follows. Structure-specific nuclease with 5'-flap endonuclease and 5'-3' exonuclease activities involved in DNA replication and repair. During DNA replication, cleaves the 5'-overhanging flap structure that is generated by displacement synthesis when DNA polymerase encounters the 5'-end of a downstream Okazaki fragment. It enters the flap from the 5'-end and then tracks to cleave the flap base, leaving a nick for ligation. Also involved in the long patch base excision repair (LP-BER) pathway, by cleaving within the apurinic/apyrimidinic (AP) site-terminated flap. Acts as a genome stabilization factor that prevents flaps from equilibrating into structures that lead to duplications and deletions. Also possesses 5'-3' exonuclease activity on nicked or gapped double-stranded DNA, and exhibits RNase H activity. Also involved in replication and repair of rDNA and in repairing mitochondrial DNA. The chain is Flap endonuclease 1 from Drosophila yakuba (Fruit fly).